The chain runs to 350 residues: Hydroxymethylglutaryl-CoA synthase (350 aa).

The Proton donor/acceptor role is filled by E83. C115 functions as the Acyl-thioester intermediate in the catalytic mechanism. (3S)-3-hydroxy-3-methylglutaryl-CoA is bound by residues C115 and T156. R204 contacts CoA. (3S)-3-hydroxy-3-methylglutaryl-CoA contacts are provided by T206 and H239. The active-site Proton donor/acceptor is H239. K244 provides a ligand contact to CoA. (3S)-3-hydroxy-3-methylglutaryl-CoA contacts are provided by N271 and S301.

This sequence belongs to the thiolase-like superfamily. Archaeal HMG-CoA synthase family. As to quaternary structure, interacts with acetoacetyl-CoA thiolase that catalyzes the precedent step in the pathway and with a DUF35 protein. The acetoacetyl-CoA thiolase/HMG-CoA synthase complex channels the intermediate via a fused CoA-binding site, which allows for efficient coupling of the endergonic thiolase reaction with the exergonic HMGCS reaction.

The catalysed reaction is acetoacetyl-CoA + acetyl-CoA + H2O = (3S)-3-hydroxy-3-methylglutaryl-CoA + CoA + H(+). It participates in metabolic intermediate biosynthesis; (R)-mevalonate biosynthesis; (R)-mevalonate from acetyl-CoA: step 2/3. Functionally, catalyzes the condensation of acetyl-CoA with acetoacetyl-CoA to form 3-hydroxy-3-methylglutaryl-CoA (HMG-CoA). Functions in the mevalonate (MVA) pathway leading to isopentenyl diphosphate (IPP), a key precursor for the biosynthesis of isoprenoid compounds that are building blocks of archaeal membrane lipids. The polypeptide is Hydroxymethylglutaryl-CoA synthase (Thermococcus gammatolerans (strain DSM 15229 / JCM 11827 / EJ3)).